The chain runs to 202 residues: Twist-related protein 1 (202 aa).

Residues 1-18 (MMQDVSSSPVSPADDSLS) are compositionally biased toward low complexity. The tract at residues 1–105 (MMQDVSSSPV…GGGSPQSYEE (105 aa)) is disordered. Residues 34 to 43 (RGGRKRRSSR) show a composition bias toward basic residues. 2 stretches are compositionally biased toward gly residues: residues 46-65 (AGGG…GGDE) and 80-99 (GCGG…GGGS). Positions 108–159 (TQRVMANVRERQRTQSLNEAFAALRKIIPTLPSDKLSKIQTLKLAARYIDFL) constitute a bHLH domain. The tract at residues 161–191 (QVLQSDELDSKMASCSYVAHERLSYAFSVWR) is sufficient for transactivation activity.

As to quaternary structure, efficient DNA binding requires dimerization with another bHLH protein. Homodimer or heterodimer with E proteins such as TCF3. ID1 binds preferentially to TCF3 but does not interact efficiently with TWIST1 so ID1 levels control the amount of TCF3 available to dimerize with TWIST1 and thus determine the type of dimer formed. In terms of tissue distribution, subset of mesodermal cells.

It localises to the nucleus. In terms of biological role, acts as a transcriptional regulator. Inhibits myogenesis by sequestrating E proteins, inhibiting trans-activation by MEF2, and inhibiting DNA-binding by MYOD1 through physical interaction. This interaction probably involves the basic domains of both proteins. Also represses expression of pro-inflammatory cytokines such as TNFA and IL1B. Regulates cranial suture patterning and fusion. Activates transcription as a heterodimer with E proteins. Regulates gene expression differentially, depending on dimer composition. Homodimers induce expression of FGFR2 and POSTN while heterodimers repress FGFR2 and POSTN expression and induce THBS1 expression. Heterodimerization is also required for osteoblast differentiation. Represses the activity of the circadian transcriptional activator: NPAS2-BMAL1 heterodimer. The protein is Twist-related protein 1 (TWIST1) of Homo sapiens (Human).